A 214-amino-acid polypeptide reads, in one-letter code: Large ribosomal subunit protein uL4 (214 aa).

Residues 56–86 are disordered; it reads THKVKNRAEVSGTGKKPWKQKSTGKARAGSK. The segment covering 71–85 has biased composition (basic residues); it reads KPWKQKSTGKARAGS.

Belongs to the universal ribosomal protein uL4 family. As to quaternary structure, part of the 50S ribosomal subunit.

In terms of biological role, one of the primary rRNA binding proteins, this protein initially binds near the 5'-end of the 23S rRNA. It is important during the early stages of 50S assembly. It makes multiple contacts with different domains of the 23S rRNA in the assembled 50S subunit and ribosome. Functionally, forms part of the polypeptide exit tunnel. The polypeptide is Large ribosomal subunit protein uL4 (Mesomycoplasma hyopneumoniae (strain 232) (Mycoplasma hyopneumoniae)).